The following is a 240-amino-acid chain: Ubiquinone biosynthesis O-methyltransferase (240 aa).

Residues R44, G64, D85, and M129 each coordinate S-adenosyl-L-methionine.

It belongs to the methyltransferase superfamily. UbiG/COQ3 family.

It carries out the reaction a 3-demethylubiquinol + S-adenosyl-L-methionine = a ubiquinol + S-adenosyl-L-homocysteine + H(+). It catalyses the reaction a 3-(all-trans-polyprenyl)benzene-1,2-diol + S-adenosyl-L-methionine = a 2-methoxy-6-(all-trans-polyprenyl)phenol + S-adenosyl-L-homocysteine + H(+). Its pathway is cofactor biosynthesis; ubiquinone biosynthesis. In terms of biological role, O-methyltransferase that catalyzes the 2 O-methylation steps in the ubiquinone biosynthetic pathway. This is Ubiquinone biosynthesis O-methyltransferase from Escherichia coli O9:H4 (strain HS).